Consider the following 371-residue polypeptide: Putative 8-amino-7-oxononanoate synthase (371 aa).

Arg-21 is a substrate binding site. Pyridoxal 5'-phosphate is bound at residue 108-109; it reads GY. His-133 is a substrate binding site. Pyridoxal 5'-phosphate is bound by residues Ser-180, 205–208, and 234–237; these read DDAH and TLSK. Lys-237 bears the N6-(pyridoxal phosphate)lysine mark. Position 333 (Thr-333) interacts with substrate.

It belongs to the class-II pyridoxal-phosphate-dependent aminotransferase family. BioF subfamily. As to quaternary structure, homodimer. The cofactor is pyridoxal 5'-phosphate.

The enzyme catalyses 6-carboxyhexanoyl-[ACP] + L-alanine + H(+) = (8S)-8-amino-7-oxononanoate + holo-[ACP] + CO2. It functions in the pathway cofactor biosynthesis; biotin biosynthesis. Functionally, catalyzes the decarboxylative condensation of pimeloyl-[acyl-carrier protein] and L-alanine to produce 8-amino-7-oxononanoate (AON), [acyl-carrier protein], and carbon dioxide. The sequence is that of Putative 8-amino-7-oxononanoate synthase (bioF) from Bacillus subtilis subsp. natto.